The chain runs to 151 residues: Acidic phospholipase A2 1 (151 aa).

An N-terminal signal peptide occupies residues 1–21 (MNPAHLLVLSAVCVSLLGASS). The propeptide occupies 22-27 (IPPQPL). Disulfide bonds link cysteine 38/cysteine 104, cysteine 54/cysteine 151, cysteine 56/cysteine 72, cysteine 71/cysteine 132, cysteine 78/cysteine 125, cysteine 88/cysteine 118, and cysteine 111/cysteine 123. Ca(2+)-binding residues include tyrosine 55, glycine 57, and glycine 59. Histidine 75 is an active-site residue. Ca(2+) is bound at residue aspartate 76. Residue aspartate 126 is part of the active site.

Ca(2+) serves as cofactor. Expressed by the venom gland.

The protein localises to the secreted. It catalyses the reaction a 1,2-diacyl-sn-glycero-3-phosphocholine + H2O = a 1-acyl-sn-glycero-3-phosphocholine + a fatty acid + H(+). Functionally, snake venom phospholipase A2 (PLA2) that may exhibit cardiotoxicity, myotoxicity, antiplatelet activity, and edema-inducing activity. PLA2 catalyzes the calcium-dependent hydrolysis of the 2-acyl groups in 3-sn-phosphoglycerides. The chain is Acidic phospholipase A2 1 from Ophiophagus hannah (King cobra).